Consider the following 132-residue polypeptide: Mediator of RNA polymerase II transcription subunit 11 (132 aa).

It belongs to the Mediator complex subunit 11 family. Component of the Mediator complex.

The protein localises to the nucleus. Its function is as follows. Component of the Mediator complex, a coactivator involved in the regulated transcription of nearly all RNA polymerase II-dependent genes. Mediator functions as a bridge to convey information from gene-specific regulatory proteins to the basal RNA polymerase II transcription machinery. Mediator is recruited to promoters by direct interactions with regulatory proteins and serves as a scaffold for theQ9P086 assembly of a functional pre-initiation complex with RNA polymerase II and the general transcription factors. This is Mediator of RNA polymerase II transcription subunit 11 (MED11) from Aedes aegypti (Yellowfever mosquito).